A 186-amino-acid polypeptide reads, in one-letter code: ADP-ribosylation factor-like protein 8B (186 aa).

An intramembrane region (note=Mediates targeting to membranes) is located at residues 1-19 (MLALISRLLDWFRSLFWKE). Residues 29–35 (QYSGKTT), 71–75 (DIGGQ), and 130–133 (NKRD) contribute to the GTP site. Lys141 is covalently cross-linked (Glycyl lysine isopeptide (Lys-Gly) (interchain with G-Cter in ubiquitin)).

It belongs to the small GTPase superfamily. Arf family. As to quaternary structure, interacts with tubulin. Interacts with BORCS5; recruits ARL8B to lysosomes. Interacts with VPS41; the interaction mediates the recruitment of the HOPS complex to lysosomes. Interacts (GTP-bound form) with PLEKHM2 (via RUN domain); the interaction is required to recruit the motor protein kinesin-1 on lysosomes. Interacts (GTP-bound form) with PLEKHM1 (via RUN domain); the interaction is required for PLEKHM1 localization to lysosomes and for ARL8B function in delivery and degradation of endocytic and autophagic cargo in lysosomes. PLEKHM1 and PLEKHM2 compete for interaction with ARL8B. Interacts (GTP-bound form) with RUFY1; the interaction is required for RUFY1 endosomal location. When GTP-bound, interacts with RUFY3 and RUFY4, but not with RUFY1, nor RUFY2. In terms of processing, ubiquitinated at Lys-141 by RNF167, leading to its degradation.

It is found in the late endosome membrane. Its subcellular location is the lysosome membrane. The protein localises to the cytoplasm. It localises to the cytoskeleton. The protein resides in the spindle. It is found in the cell projection. Its subcellular location is the axon. The protein localises to the synapse. It localises to the cytolytic granule membrane. The protein resides in the early endosome membrane. The enzyme catalyses GTP + H2O = GDP + phosphate + H(+). Functionally, small GTPase which cycles between active GTP-bound and inactive GDP-bound states. In its active state, binds to a variety of effector proteins playing a key role in the regulation of lysosomal positioning which is important for nutrient sensing, natural killer cell-mediated cytotoxicity and antigen presentation. Along with its effectors, orchestrates lysosomal transport and fusion. Localizes specifically to lysosomal membranes and mediates anterograde lysosomal motility by recruiting PLEKHM2, which in turn recruits the motor protein kinesin-1 on lysosomes. Required for lysosomal and cytolytic granule exocytosis. Critical factor involved in NK cell-mediated cytotoxicity. Drives the polarization of cytolytic granules and microtubule-organizing centers (MTOCs) toward the immune synapse between effector NK lymphocytes and target cells. In neurons, mediates the anterograde axonal long-range transport of presynaptic lysosome-related vesicles required for presynaptic biogenesis and synaptic function. Also acts as a regulator of endosome to lysosome trafficking pathways of special significance for host defense. Recruits RUFY1 onto early endosomes regulating endosomes to trans-Golgi network proteins retrieval. Regulates cargo trafficking to lysosomes by binding to PLEKHM1 and recruiting the HOPS subunit VPS41, resulting in functional assembly of the HOPS complex on lysosomal membranes. Plays an important role in cargo delivery to lysosomes for antigen presentation and microbial killing. Directs the intersection of CD1d with lipid antigens in lysosomes, and plays a role in intersecting phagosomes with lysosomes to generate phagolysosomes that kill microbes. Involved in the process of MHC II presentation. Regulates the delivery of antigens to lysosomes and the formation of MHC II-peptide complexes through the recruitment of the HOPS complex to lysosomes allowing the fusion of late endosomes to lysosomes. May play a role in chromosome segregation. This is ADP-ribosylation factor-like protein 8B (ARL8B) from Macaca fascicularis (Crab-eating macaque).